A 439-amino-acid polypeptide reads, in one-letter code: Ribosomal protein uS12 methylthiotransferase RimO (439 aa).

One can recognise an MTTase N-terminal domain in the interval Ser-2–Asn-114. [4Fe-4S] cluster-binding residues include Cys-11, Cys-45, Cys-77, Cys-146, Cys-150, and Cys-153. Residues Thr-132 to Glu-363 enclose the Radical SAM core domain.

Belongs to the methylthiotransferase family. RimO subfamily. It depends on [4Fe-4S] cluster as a cofactor.

It is found in the cytoplasm. It catalyses the reaction L-aspartate(89)-[ribosomal protein uS12]-hydrogen + (sulfur carrier)-SH + AH2 + 2 S-adenosyl-L-methionine = 3-methylsulfanyl-L-aspartate(89)-[ribosomal protein uS12]-hydrogen + (sulfur carrier)-H + 5'-deoxyadenosine + L-methionine + A + S-adenosyl-L-homocysteine + 2 H(+). Functionally, catalyzes the methylthiolation of an aspartic acid residue of ribosomal protein uS12. The sequence is that of Ribosomal protein uS12 methylthiotransferase RimO from Campylobacter jejuni subsp. jejuni serotype O:23/36 (strain 81-176).